The chain runs to 302 residues: Succinate--CoA ligase [ADP-forming] subunit alpha (302 aa).

Residues 17–20 (TGST), Lys-43, and 96–98 (ITE) each bind CoA. Tyr-159 is a binding site for substrate. His-247 acts as the Tele-phosphohistidine intermediate in catalysis.

Belongs to the succinate/malate CoA ligase alpha subunit family. As to quaternary structure, heterotetramer of two alpha and two beta subunits.

The catalysed reaction is succinate + ATP + CoA = succinyl-CoA + ADP + phosphate. It carries out the reaction GTP + succinate + CoA = succinyl-CoA + GDP + phosphate. The protein operates within carbohydrate metabolism; tricarboxylic acid cycle; succinate from succinyl-CoA (ligase route): step 1/1. Succinyl-CoA synthetase functions in the citric acid cycle (TCA), coupling the hydrolysis of succinyl-CoA to the synthesis of either ATP or GTP and thus represents the only step of substrate-level phosphorylation in the TCA. The alpha subunit of the enzyme binds the substrates coenzyme A and phosphate, while succinate binding and nucleotide specificity is provided by the beta subunit. The protein is Succinate--CoA ligase [ADP-forming] subunit alpha of Staphylococcus aureus (strain MSSA476).